Here is an 869-residue protein sequence, read N- to C-terminus: Bifunctional uridylyltransferase/uridylyl-removing enzyme (869 aa).

Residues 1–332 (MTDTPAERPD…QFDGEATPEP (332 aa)) are uridylyltransferase. The segment at 333–691 (LGGGFSLRRG…RRAVPDNDAL (359 aa)) is uridylyl-removing. Residues 450–572 (VDQHTLMVLR…VGTRERLDYL (123 aa)) enclose the HD domain. 2 ACT domains span residues 692–774 (EVFV…RAVP) and 798–869 (RISL…LDPV).

The protein belongs to the GlnD family. Mg(2+) is required as a cofactor.

The catalysed reaction is [protein-PII]-L-tyrosine + UTP = [protein-PII]-uridylyl-L-tyrosine + diphosphate. The enzyme catalyses [protein-PII]-uridylyl-L-tyrosine + H2O = [protein-PII]-L-tyrosine + UMP + H(+). With respect to regulation, uridylyltransferase (UTase) activity is inhibited by glutamine, while glutamine activates uridylyl-removing (UR) activity. In terms of biological role, modifies, by uridylylation and deuridylylation, the PII regulatory proteins (GlnB and homologs), in response to the nitrogen status of the cell that GlnD senses through the glutamine level. Under low glutamine levels, catalyzes the conversion of the PII proteins and UTP to PII-UMP and PPi, while under higher glutamine levels, GlnD hydrolyzes PII-UMP to PII and UMP (deuridylylation). Thus, controls uridylylation state and activity of the PII proteins, and plays an important role in the regulation of nitrogen assimilation and metabolism. The chain is Bifunctional uridylyltransferase/uridylyl-removing enzyme from Xanthomonas axonopodis pv. citri (strain 306).